A 421-amino-acid polypeptide reads, in one-letter code: ATP-dependent RNA helicase RhlB (421 aa).

A Q motif motif is present at residues 9 to 37 (QKFSDFALHPKVVEVLEKKGFHNCTPIQA). The Helicase ATP-binding domain occupies 40 to 219 (LPLTLAGRDV…FEQMNNAEYI (180 aa)). 53–60 (AQTGTGKT) is a binding site for ATP. The DEAD box motif lies at 165 to 168 (DEAD). The region spanning 245–390 (RLLQTLIEEE…VSKYNPDALM (146 aa)) is the Helicase C-terminal domain. A disordered region spans residues 392-421 (DLPKPLRLTRPRTGNGPRRTGAPRNRRRSG). Positions 402–414 (PRTGNGPRRTGAP) are enriched in low complexity.

The protein belongs to the DEAD box helicase family. RhlB subfamily. As to quaternary structure, component of the RNA degradosome, which is a multiprotein complex involved in RNA processing and mRNA degradation.

Its subcellular location is the cytoplasm. It catalyses the reaction ATP + H2O = ADP + phosphate + H(+). In terms of biological role, DEAD-box RNA helicase involved in RNA degradation. Has RNA-dependent ATPase activity and unwinds double-stranded RNA. This is ATP-dependent RNA helicase RhlB from Shigella boydii serotype 18 (strain CDC 3083-94 / BS512).